The sequence spans 85 residues: Homeobox protein knotted-1-like 7 (85 aa).

The ELK domain maps to 1–21 (ELKNELKQGYKEKLVDIREEI). The homeobox; TALE-type DNA-binding region spans 22–85 (MRKRRAGKLP…NQRKRNWHSN (64 aa)).

It belongs to the TALE/KNOX homeobox family. As to expression, expressed in all tissues examined. Highest expression in leaves.

The protein resides in the nucleus. In Zea mays (Maize), this protein is Homeobox protein knotted-1-like 7 (KNOX7).